The sequence spans 138 residues: Putative pre-16S rRNA nuclease (138 aa).

It belongs to the YqgF nuclease family.

It localises to the cytoplasm. In terms of biological role, could be a nuclease involved in processing of the 5'-end of pre-16S rRNA. This chain is Putative pre-16S rRNA nuclease, found in Klebsiella pneumoniae (strain 342).